A 311-amino-acid chain; its full sequence is Olfactory receptor 10D1B (311 aa).

Over 1–24 (MKNLSVVTQFILLGIPHTEGVETM) the chain is Extracellular. A helical membrane pass occupies residues 25–45 (LFVLFFSFYIFTLVGNLLILL). At 46–54 (AIVSSSRLH) the chain is on the cytoplasmic side. The chain crosses the membrane as a helical span at residues 55 to 75 (TPMYFFLCQLSVCDIFFPSVS). Residues 76–95 (SPKMLFYLSGNTPAISYAGC) lie on the Extracellular side of the membrane. A disulfide bridge links C95 with C187. A helical membrane pass occupies residues 96–116 (VSQLFFYHFLGGTECFLYTVM). The Cytoplasmic segment spans residues 117 to 137 (AYDRFVAICYPLRYSVIMSHR). Residues 138 to 158 (ICAFLAMGTAVFGCIHSTFLT) form a helical membrane-spanning segment. Residues 159–192 (TLTFQLPYCGPKDVNYYFCDIPVVMKLACADTST) are Extracellular-facing. The helical transmembrane segment at 193–213 (LEMVGFISVGLMPLSCFFFIL) threads the bilayer. At 214-237 (TSYSCIVRSILQIRSTEGRHRAFS) the chain is on the cytoplasmic side. A helical transmembrane segment spans residues 238–258 (TCSAHFTAILLFYMPVIFIYL). The Extracellular segment spans residues 259–271 (RPTPSPWLDATVQ). Residues 272-288 (ILNNLVTPMLNPLIYSL) form a helical membrane-spanning segment. Residues 289 to 311 (RNKEVKSSLWTVLHLLCFLPKHL) lie on the Cytoplasmic side of the membrane.

Belongs to the G-protein coupled receptor 1 family.

The protein localises to the cell membrane. Odorant receptor. The polypeptide is Olfactory receptor 10D1B (Mus musculus (Mouse)).